The sequence spans 339 residues: Intelectin-1 (339 aa).

Residues 1–18 (MLSYSLLLLALAFPAGHA) form the signal peptide. Residues 58–108 (GDMNYGYRSCNEIKSSDSRAPDGIYTLATEDGESYQTFCDMTTNGGGWTLV) enclose the Fibrinogen C-terminal domain. A disulfide bridge connects residues Cys67 and Cys96. Ca(2+) contacts are provided by His112, Glu113, Asn115, Gly118, Gly123, Asp124, and Asp159. Cystine bridges form between Cys120–Cys306, Cys225–Cys285, and Cys277–Cys291. N-linked (GlcNAc...) asparagine glycosylation occurs at Asn189. Ca(2+)-binding residues include Asn286, Glu288, Glu300, and Asp308. A carbohydrate-binding positions include 288–289 (EH) and Glu300.

Homotrimer; disulfide-linked. Homohexamer; disulfide-linked. Forms primarily homotrimers in solution, but can also form homohexamers. In terms of processing, N-glycosylated.

The protein localises to the secreted. It is found in the cytoplasmic vesicle. The protein resides in the secretory vesicle. Its function is as follows. Lectin that specifically recognizes microbial carbohydrate chains in a calcium-dependent manner. Binds to microbial glycans that contain a terminal acyclic 1,2-diol moiety, including beta-linked D-galactofuranose (beta-Galf) and D-phosphoglycerol-modified glycans. Binds to S.pneumoniae serotypes with glycans that contain beta-linked D-galactofuranose (beta-Galf) and with D-phosphoglycerol-modified glycans. Can bind a variety of monosaccharides (in vitro). Probably plays a role in the defense system against microorganisms. In Xenopus laevis (African clawed frog), this protein is Intelectin-1 (itln1).